A 545-amino-acid polypeptide reads, in one-letter code: Mesoderm induction early response protein 2 (545 aa).

Serine 11 is modified (phosphoserine). The disordered stretch occupies residues 100-189 (DPISDRESEG…SSDTEEDSLP (90 aa)). Positions 140–153 (QSSADDLTPSVTSH) are enriched in polar residues. One can recognise an ELM2 domain in the interval 195–292 (KEIMVGPQFQ…EALRRLRFNV (98 aa)). One can recognise an SANT domain in the interval 297–349 (DGLCAWSEEECRNFEHGFRVHGKNFHLIQANKVRTRSVGECVEYYYLWKKSER). A disordered region spans residues 364 to 464 (YVPSGTTDAD…YQPAVTAPEP (101 aa)).

Part of a complex containing at least CDYL, MIER1, MIER2, HDAC1 and HDAC2.

The protein localises to the nucleus. In terms of biological role, transcriptional repressor. This Homo sapiens (Human) protein is Mesoderm induction early response protein 2 (MIER2).